Here is a 228-residue protein sequence, read N- to C-terminus: Ribose-5-phosphate isomerase A (228 aa).

Substrate-binding positions include 32–35 (TGST), 85–88 (DGAD), and 98–101 (KGGG). Residue glutamate 107 is the Proton acceptor of the active site. Position 125 (lysine 125) interacts with substrate.

Belongs to the ribose 5-phosphate isomerase family. Homodimer.

The enzyme catalyses aldehydo-D-ribose 5-phosphate = D-ribulose 5-phosphate. The protein operates within carbohydrate degradation; pentose phosphate pathway; D-ribose 5-phosphate from D-ribulose 5-phosphate (non-oxidative stage): step 1/1. In terms of biological role, catalyzes the reversible conversion of ribose-5-phosphate to ribulose 5-phosphate. This is Ribose-5-phosphate isomerase A from Cupriavidus pinatubonensis (strain JMP 134 / LMG 1197) (Cupriavidus necator (strain JMP 134)).